The primary structure comprises 367 residues: Glutamate 5-kinase (367 aa).

An ATP-binding site is contributed by lysine 9. Residues serine 49, aspartate 136, and asparagine 148 each coordinate substrate. Residues 168–169 and 210–216 each bind ATP; these read TD and TGGMKSK. The 75-residue stretch at 276 to 350 folds into the PUA domain; the sequence is SGQIEVDAGA…GMQSQDIQVR (75 aa).

It belongs to the glutamate 5-kinase family.

It is found in the cytoplasm. The catalysed reaction is L-glutamate + ATP = L-glutamyl 5-phosphate + ADP. It functions in the pathway amino-acid biosynthesis; L-proline biosynthesis; L-glutamate 5-semialdehyde from L-glutamate: step 1/2. Its function is as follows. Catalyzes the transfer of a phosphate group to glutamate to form L-glutamate 5-phosphate. This is Glutamate 5-kinase from Bacillus cereus (strain G9842).